A 266-amino-acid chain; its full sequence is UPF0294 protein YafD (266 aa).

The protein belongs to the UPF0294 family.

The protein localises to the cytoplasm. The protein is UPF0294 protein YafD of Salmonella agona (strain SL483).